Consider the following 466-residue polypeptide: Chromosomal replication initiator protein DnaA (466 aa).

The segment at 1-86 (MSLSLWQQCL…EVGTKPVTQT (86 aa)) is domain I, interacts with DnaA modulators. The interval 86–129 (TLKTPVHNVVAPTQTTTAQPQRVAPAARSGWDNVPAPAEPTYRS) is domain II. The tract at residues 130–346 (NVNVKHTFDN…GALNRVIANA (217 aa)) is domain III, AAA+ region. ATP contacts are provided by G174, G176, K177, and T178. Residues 347–466 (NFTGRAITID…FSNLIRTLSS (120 aa)) are domain IV, binds dsDNA.

Belongs to the DnaA family. In terms of assembly, oligomerizes as a right-handed, spiral filament on DNA at oriC.

It is found in the cytoplasm. In terms of biological role, plays an essential role in the initiation and regulation of chromosomal replication. ATP-DnaA binds to the origin of replication (oriC) to initiate formation of the DNA replication initiation complex once per cell cycle. Binds the DnaA box (a 9 base pair repeat at the origin) and separates the double-stranded (ds)DNA. Forms a right-handed helical filament on oriC DNA; dsDNA binds to the exterior of the filament while single-stranded (ss)DNA is stabiized in the filament's interior. The ATP-DnaA-oriC complex binds and stabilizes one strand of the AT-rich DNA unwinding element (DUE), permitting loading of DNA polymerase. After initiation quickly degrades to an ADP-DnaA complex that is not apt for DNA replication. Binds acidic phospholipids. The sequence is that of Chromosomal replication initiator protein DnaA from Salmonella dublin (strain CT_02021853).